Here is a 264-residue protein sequence, read N- to C-terminus: uncharacterized protein (264 aa).

An N-terminal signal peptide occupies residues M1–A22. Residues L227–Y247 traverse the membrane as a helical segment.

The protein localises to the membrane. This is an uncharacterized protein from Bacillus subtilis (strain 168).